Reading from the N-terminus, the 417-residue chain is Gamma-glutamyl phosphate reductase (417 aa).

This sequence belongs to the gamma-glutamyl phosphate reductase family.

Its subcellular location is the cytoplasm. The enzyme catalyses L-glutamate 5-semialdehyde + phosphate + NADP(+) = L-glutamyl 5-phosphate + NADPH + H(+). It participates in amino-acid biosynthesis; L-proline biosynthesis; L-glutamate 5-semialdehyde from L-glutamate: step 2/2. Catalyzes the NADPH-dependent reduction of L-glutamate 5-phosphate into L-glutamate 5-semialdehyde and phosphate. The product spontaneously undergoes cyclization to form 1-pyrroline-5-carboxylate. In Escherichia fergusonii (strain ATCC 35469 / DSM 13698 / CCUG 18766 / IAM 14443 / JCM 21226 / LMG 7866 / NBRC 102419 / NCTC 12128 / CDC 0568-73), this protein is Gamma-glutamyl phosphate reductase.